Reading from the N-terminus, the 433-residue chain is MKLFGSSGIRGITNKEVTTDLALKVGLALGKTKRSAVVGRDPRIAGEMIEHAIISGLLSAGCDVVRIGMVSTPTLAYATKDYDCGVMITASHNPAEYVGIKLWNPDGMAFDSSQQEEIEECIEKEDFEPVNWDQIGNVSEDANAIRQHTNMILQNVKRSSKRVIIDCGCGAGSTITPYVLRKMGCEVITLNSQPDGYFPARNPEPNDTNLTLLKIAVKEFGADIGIAQDGDADRMMAIDEKGEFITGDEMLALFARHECDEGAIIVVPVDTSMMVDDALPGSTVIRTRVGDVYVAEEIKRCNADIGGEPSGSWIFPKISYCPDGIFASAKIMELIENRTLSELKKELPHYPTYRGTVKCDNERKAHVMEVVHSKLEKCGKISDIDGIRVEMDNGWVLVRPSGTEPKIRITAEAREGADRLFSMAENIIKEALN.

Residue serine 91 is the Phosphoserine intermediate of the active site. Mg(2+) contacts are provided by serine 91, aspartate 229, aspartate 231, and aspartate 233. The residue at position 91 (serine 91) is a Phosphoserine.

The protein belongs to the phosphohexose mutase family. Mg(2+) is required as a cofactor. Activated by phosphorylation.

It catalyses the reaction alpha-D-glucosamine 1-phosphate = D-glucosamine 6-phosphate. Functionally, catalyzes the conversion of glucosamine-6-phosphate to glucosamine-1-phosphate. The polypeptide is Probable phosphoglucosamine mutase (Methanococcoides burtonii (strain DSM 6242 / NBRC 107633 / OCM 468 / ACE-M)).